Reading from the N-terminus, the 74-residue chain is DNA-directed RNA polymerase subunit omega (74 aa).

The protein belongs to the RNA polymerase subunit omega family. In terms of assembly, the RNAP catalytic core consists of 2 alpha, 1 beta, 1 beta' and 1 omega subunit. When a sigma factor is associated with the core the holoenzyme is formed, which can initiate transcription.

It catalyses the reaction RNA(n) + a ribonucleoside 5'-triphosphate = RNA(n+1) + diphosphate. Functionally, promotes RNA polymerase assembly. Latches the N- and C-terminal regions of the beta' subunit thereby facilitating its interaction with the beta and alpha subunits. This is DNA-directed RNA polymerase subunit omega from Hydrogenovibrio crunogenus (strain DSM 25203 / XCL-2) (Thiomicrospira crunogena).